Consider the following 141-residue polypeptide: Hemoglobin subunit alpha (141 aa).

Residues 1–141 (VLSEEDKSHV…VSAMLTSKYR (141 aa)) form the Globin domain. Position 58 (His-58) interacts with O2. His-87 is a heme b binding site.

This sequence belongs to the globin family. As to quaternary structure, heterotetramer of two alpha chains and two beta chains. As to expression, red blood cells.

Involved in oxygen transport from the lung to the various peripheral tissues. The sequence is that of Hemoglobin subunit alpha (HBA) from Caiman crocodilus (Spectacled caiman).